The chain runs to 911 residues: Viral IRF4-like protein (911 aa).

The IRF tryptophan pentad repeat DNA-binding region spans S7 to R114. Disordered regions lie at residues T147–S184, A211–P302, G494–C537, and E681–P727. Low complexity predominate over residues A211–T221. Polar residues-rich tracts occupy residues R222–T231 and G495–Q505. A compositionally biased stretch (basic residues) spans R697–P710.

The protein belongs to the IRF family. Interacts with host MDM2; this interaction facilitates the proteasomal degradation of TP53/p53. Interacts with host IRF7; this interaction prevents IRF7 dimerization and subsequent activation.

The protein localises to the host nucleus. In terms of biological role, plays a role in host cell apoptosis modulation by promoting TP53/p53 ubiquitination and subsequent degradation and thus down-regulating TP53/p53-mediated apoptosis. Works as a potential viral transcription factor to modulate host gene expression to build favorable environments for the viral lytic life cycle and greatly accelerates the induction of an immediate early gene RTA, early genes ORF36 and ORF57, late genes ORF25 and ORF64, and latent genes LANA1 and v-IRF3. Inhibits host interferon-alpha production by interacting with host IRF7 and preventing IRF7 dimerization. This is Viral IRF4-like protein (vIRF-4) from Homo sapiens (Human).